The sequence spans 399 residues: MAREKFERNKPHVNIGTIGHVDHGKTTLTAAITNVLAKKGQAEVQNYADIDGAPEERERGITINTAHVEYETDSRHYAHVDCPGHADYVKNMITGAAQMDGAILVCAATDGPMAQTKEHILLAKQVGVPALVVALNKCDMVDDEEIIELVELEIRELLSSYDFPGDDIPVVQVSGLKAIEGEAEWEAKIEELMAAVDASIPEPEREVDKPFLMAIEDVFSITGRGTVATGRIERGIVKVGEEVEVVGIREPRKTTVTGVEMFRKLLDEGMAGDNVGLLLRGIQKEDIERGMVLVKPGSITPHTKFEGQVYVLKKEEGGRHTPFFAGYRPQFYIRTTDVTGQITAFTAEDGSNVEMVMPGDNIQMTGELICPVAMELGMRFAIREGGRTIGAGVVSKIIE.

One can recognise a tr-type G domain in the interval 10-204; it reads KPHVNIGTIG…AVDASIPEPE (195 aa). The tract at residues 19 to 26 is G1; sequence GHVDHGKT. 19-26 serves as a coordination point for GTP; it reads GHVDHGKT. Residue threonine 26 coordinates Mg(2+). Positions 60 to 64 are G2; sequence GITIN. A G3 region spans residues 81-84; the sequence is DCPG. GTP is bound by residues 81–85 and 136–139; these read DCPGH and NKCD. The interval 136 to 139 is G4; it reads NKCD. A G5 region spans residues 174–176; it reads SGL.

Belongs to the TRAFAC class translation factor GTPase superfamily. Classic translation factor GTPase family. EF-Tu/EF-1A subfamily. Monomer.

Its subcellular location is the cytoplasm. The enzyme catalyses GTP + H2O = GDP + phosphate + H(+). Functionally, GTP hydrolase that promotes the GTP-dependent binding of aminoacyl-tRNA to the A-site of ribosomes during protein biosynthesis. This Synechococcus sp. (strain CC9311) protein is Elongation factor Tu.